The sequence spans 361 residues: MKILVTGGAGFIGSAVVRHIINNTQDSVVNVDKLTYAGNLESLAEISDSERYSFENADICDAEGDGLYFGQHQLDAVMHLAAESHVDRSITGPAAFIETNIVGTYVLLEAARNYWSGLDDEKKKNFRFHHISTDEVYGDLPHPDEVNSNETLQLFTETTAYAPSSPYSASKASSDHLVRAWKRTYGLPTIVSNCSNNYGPYHFPEKLIPLVILNALEGKALPIYGKGDQIRDWLYVEDHARALYTVVTEGKAGETYNIGGHNEKKNIDVVFTICDLLDEIVPKEKSYREQITYVADRPGHDRRYAIDADKISRELGWKPQETFESGIRKTVEWYLANTNWVENVKSGAYQSWIEQNYEGRQ.

NAD(+) contacts are provided by residues 11-12, 32-35, 58-59, 80-84, and T99; these read FI, DKLT, DI, and LAAES. S84 contributes to the substrate binding site. Residue T133 coordinates substrate. D134 serves as the catalytic Proton donor. Residues E135 and Y167 each act as proton acceptor in the active site. Residue 167 to 171 coordinates NAD(+); the sequence is YSASK. N196 contacts substrate. N197 serves as a coordination point for NAD(+). Residues 206-207, 222-224, R231, N266, and 296-300 contribute to the substrate site; these read KL, PIY, and DRPGH.

The protein belongs to the NAD(P)-dependent epimerase/dehydratase family. dTDP-glucose dehydratase subfamily. In terms of assembly, homodimer. Requires NAD(+) as cofactor.

It carries out the reaction dTDP-alpha-D-glucose = dTDP-4-dehydro-6-deoxy-alpha-D-glucose + H2O. It functions in the pathway carbohydrate biosynthesis; dTDP-L-rhamnose biosynthesis. It participates in bacterial outer membrane biogenesis; LPS O-antigen biosynthesis. Functionally, catalyzes the dehydration of dTDP-D-glucose to form dTDP-6-deoxy-D-xylo-4-hexulose via a three-step process involving oxidation, dehydration and reduction. This is dTDP-glucose 4,6-dehydratase (rfbB) from Escherichia coli.